A 587-amino-acid polypeptide reads, in one-letter code: General negative regulator of transcription subunit 4 (587 aa).

An RING-type zinc finger spans residues 33–78 (CPLCIEPMDITDKNFFPCPCGYQICQFCYNNIRQNPELNGRCPACR). A coiled-coil region spans residues 94-128 (EELKMERAKLARKEKERKHREKERKENEYTNRKHL). The RRM domain occupies 137 to 228 (NLVYVVGINP…YMDGRLIKAA (92 aa)). The C3H1-type zinc-finger motif lies at 229-256 (YGTTKYCSSYLRGLPCPNPNCMFLHEPG). Residue Lys-270 forms a Glycyl lysine isopeptide (Lys-Gly) (interchain with G-Cter in ubiquitin) linkage. Position 310 is a phosphothreonine (Thr-310). The residue at position 312 (Ser-312) is a Phosphoserine. At Thr-326 the chain carries Phosphothreonine. Residue Ser-360 is modified to Phosphoserine. The interval 370–412 (TLNDSLGHHTTPTTENTITSTTTTTNTNATSHSHGSKKKQSLA) is disordered. Positions 377–402 (HHTTPTTENTITSTTTTTNTNATSHS) are enriched in low complexity.

Forms a NOT protein complex that comprises NOT1, NOT2, NOT3, NOT4 and NOT5. Subunit of the 1.0 MDa CCR4-NOT core complex that contains CCR4, CAF1, NOT1, NOT2, NOT3, NOT4, NOT5, CAF40 and CAF130. In the complex interacts with NOT1. The core complex probably is part of a less characterized 1.9 MDa CCR4-NOT complex.

Its subcellular location is the cytoplasm. It is found in the nucleus. It catalyses the reaction S-ubiquitinyl-[E2 ubiquitin-conjugating enzyme]-L-cysteine + [acceptor protein]-L-lysine = [E2 ubiquitin-conjugating enzyme]-L-cysteine + N(6)-ubiquitinyl-[acceptor protein]-L-lysine.. It functions in the pathway protein modification; protein ubiquitination. E3 ubiquitin-protein ligase component of the CCR4-NOT core complex, which in the nucleus seems to be a general transcription factor, and in the cytoplasm the major mRNA deadenylase involved in mRNA turnover. The NOT protein subcomplex negatively regulates the basal and activated transcription of many genes. Preferentially affects TC-type TATA element-dependent transcription. Could directly or indirectly inhibit component(s) of the general transcription machinery. In the cytoplasm, catalyzes monoubiquitination of RPS7/es7 in response to stalled ribosomes, initiating a HEL2-dependent response that activates the No-Go Decay (NGD) pathway. In Saccharomyces cerevisiae (strain ATCC 204508 / S288c) (Baker's yeast), this protein is General negative regulator of transcription subunit 4 (MOT2).